We begin with the raw amino-acid sequence, 438 residues long: Adenylosuccinate synthetase (438 aa).

Residues 12-18 and 40-42 contribute to the GTP site; these read GDEGKGK and GHT. The Proton acceptor role is filled by aspartate 13. 2 residues coordinate Mg(2+): aspartate 13 and glycine 40. Residues 13–16, 38–41, threonine 128, arginine 142, glutamine 223, threonine 238, and arginine 302 each bind IMP; these read DEGK and NAGH. Catalysis depends on histidine 41, which acts as the Proton donor. Residue 298-304 coordinates substrate; that stretch reads TTTGRPR. Residues arginine 304, 330–332, and 412–414 each bind GTP; these read KLD and GVG.

The protein belongs to the adenylosuccinate synthetase family. In terms of assembly, homodimer. Mg(2+) serves as cofactor.

The protein resides in the cytoplasm. The enzyme catalyses IMP + L-aspartate + GTP = N(6)-(1,2-dicarboxyethyl)-AMP + GDP + phosphate + 2 H(+). The protein operates within purine metabolism; AMP biosynthesis via de novo pathway; AMP from IMP: step 1/2. Plays an important role in the de novo pathway of purine nucleotide biosynthesis. Catalyzes the first committed step in the biosynthesis of AMP from IMP. The sequence is that of Adenylosuccinate synthetase from Leifsonia xyli subsp. xyli (strain CTCB07).